Consider the following 116-residue polypeptide: Large ribosomal subunit protein uL22 (116 aa).

The protein belongs to the universal ribosomal protein uL22 family. Part of the 50S ribosomal subunit.

Functionally, this protein binds specifically to 23S rRNA; its binding is stimulated by other ribosomal proteins, e.g. L4, L17, and L20. It is important during the early stages of 50S assembly. It makes multiple contacts with different domains of the 23S rRNA in the assembled 50S subunit and ribosome. The globular domain of the protein is located near the polypeptide exit tunnel on the outside of the subunit, while an extended beta-hairpin is found that lines the wall of the exit tunnel in the center of the 70S ribosome. The sequence is that of Large ribosomal subunit protein uL22 from Leptospira biflexa serovar Patoc (strain Patoc 1 / Ames).